Reading from the N-terminus, the 331-residue chain is tRNA pseudouridine synthase B (331 aa).

The active-site Nucleophile is the D51.

Belongs to the pseudouridine synthase TruB family. Type 1 subfamily.

The enzyme catalyses uridine(55) in tRNA = pseudouridine(55) in tRNA. Responsible for synthesis of pseudouridine from uracil-55 in the psi GC loop of transfer RNAs. This Verminephrobacter eiseniae (strain EF01-2) protein is tRNA pseudouridine synthase B.